Reading from the N-terminus, the 252-residue chain is 5-oxoprolinase subunit A (252 aa).

The protein belongs to the LamB/PxpA family. In terms of assembly, forms a complex composed of PxpA, PxpB and PxpC.

It carries out the reaction 5-oxo-L-proline + ATP + 2 H2O = L-glutamate + ADP + phosphate + H(+). Catalyzes the cleavage of 5-oxoproline to form L-glutamate coupled to the hydrolysis of ATP to ADP and inorganic phosphate. In Staphylococcus epidermidis (strain ATCC 35984 / DSM 28319 / BCRC 17069 / CCUG 31568 / BM 3577 / RP62A), this protein is 5-oxoprolinase subunit A.